The following is a 147-amino-acid chain: Hemoglobin subunit beta-1 (147 aa).

The Globin domain maps to 3–147 (HWTDFERSTI…VVFSLGKQYH (145 aa)). Heme b-binding residues include His64 and His93.

This sequence belongs to the globin family. In terms of assembly, hb1 is a heterotetramer of two alpha-1 chains and two beta-1 chains. Red blood cells.

Its function is as follows. Involved in oxygen transport from gills to the various peripheral tissues. This chain is Hemoglobin subunit beta-1, found in Liparis tunicatus (Kelp snailfish).